The following is a 44-amino-acid chain: Photosystem I reaction center subunit IX (44 aa).

Residues 7–27 form a helical membrane-spanning segment; the sequence is YLSVAPVISTLWFGSLAGLLI.

Belongs to the PsaJ family.

Its subcellular location is the plastid. It is found in the chloroplast thylakoid membrane. In terms of biological role, may help in the organization of the PsaE and PsaF subunits. The sequence is that of Photosystem I reaction center subunit IX from Populus alba (White poplar).